The chain runs to 183 residues: D-glycero-alpha-D-manno-heptose-1,7-bisphosphate 7-phosphatase (183 aa).

Zn(2+) is bound by residues Cys93, His95, Cys108, and Cys110.

The protein belongs to the GmhB family.

It is found in the cytoplasm. The enzyme catalyses D-glycero-alpha-D-manno-heptose 1,7-bisphosphate + H2O = D-glycero-alpha-D-manno-heptose 1-phosphate + phosphate. It participates in nucleotide-sugar biosynthesis; GDP-D-glycero-alpha-D-manno-heptose biosynthesis; GDP-D-glycero-alpha-D-manno-heptose from D-glycero-alpha-D-manno-heptose 7-phosphate: step 2/3. In terms of biological role, converts the D-glycero-alpha-D-manno-heptose 1,7-bisphosphate intermediate into D-glycero-alpha-D-manno-heptose 1-phosphate by removing the phosphate group at the C-7 position. This is D-glycero-alpha-D-manno-heptose-1,7-bisphosphate 7-phosphatase (gmhB2) from Photorhabdus laumondii subsp. laumondii (strain DSM 15139 / CIP 105565 / TT01) (Photorhabdus luminescens subsp. laumondii).